We begin with the raw amino-acid sequence, 420 residues long: Trophoblast glycoprotein (420 aa).

The N-terminal stretch at 1 to 31 (MPGGCSRGPAAGDGRLRLARLALVLLGWVSS) is a signal peptide. Topologically, residues 32–355 (SSPTSSASSF…PILPPSLQTS (324 aa)) are extracellular. One can recognise an LRRNT domain in the interval 53–91 (SAQPPLPDQCPALCECSEAARTVKCVNRNLTEVPTDLPA). 2 disulfide bridges follow: cysteine 62–cysteine 68 and cysteine 66–cysteine 77. Asparagine 81 is a glycosylation site (N-linked (GlcNAc...) asparagine). LRR repeat units lie at residues 92–113 (YVRNLFLTGNQLAVLPAGAFAR), 116–139 (PLAELAALNLSGSRLDEVRAGAFE), 141–163 (LPSLRQLDLSHNPLADLSPFAFS), 172–204 (PSPLVELILNHIVPPEDERQNRSFEGMVVAALL), 209–232 (LQGLRRLELASNHFLYLPRDVLAQ), 233–255 (LPSLRHLDLSNNSLVSLTYVSFR), and 256–275 (NLTHLESLHLEDNALKVLHN). A glycan (N-linked (GlcNAc...) asparagine) is linked at asparagine 124. An N-linked (GlcNAc...) asparagine glycan is attached at asparagine 275. The LRRCT domain occupies 283–346 (GLPHIRVFLD…LNSADLDCDP (64 aa)). Intrachain disulfides connect cysteine 298/cysteine 323 and cysteine 300/cysteine 344. Residues 356–376 (YVFLGIVLALIGAIFLLVLYL) traverse the membrane as a helical segment. Over 377–420 (NRKGIKKWMHNIRDACRDHMEGYHYRYEINADPRLTNLSSNSDV) the chain is Cytoplasmic. Serine 418 carries the post-translational modification Phosphoserine.

Highly glycosylated. Expressed by all types of trophoblasts as early as 9 weeks of development. Specific for trophoblastic cells except for amniotic epithelium. In adult tissues, the expression is limited to a few epithelial cell types but is found on a variety of carcinoma.

It localises to the cell membrane. Its function is as follows. May function as an inhibitor of Wnt/beta-catenin signaling by indirectly interacting with LRP6 and blocking Wnt3a-dependent LRP6 internalization. This Homo sapiens (Human) protein is Trophoblast glycoprotein (TPBG).